An 83-amino-acid chain; its full sequence is Acylphosphatase (83 aa).

Positions 1–83 (MIEGRVQRVG…TGDDWFEVRY (83 aa)) constitute an Acylphosphatase-like domain. Catalysis depends on residues arginine 12 and asparagine 30.

It belongs to the acylphosphatase family.

It carries out the reaction an acyl phosphate + H2O = a carboxylate + phosphate + H(+). This chain is Acylphosphatase (acyP), found in Synechococcus sp. (strain CC9605).